The primary structure comprises 602 residues: Rho family-interacting cell polarization regulator 2 (602 aa).

The interval 46–73 is disordered; sequence KKPQAKVKKMHNLGHKNSTTPKEPQPKR. Residues 48-59 show a composition bias toward basic residues; that stretch reads PQAKVKKMHNLG. A coiled-coil region spans residues 83-112; sequence NGLDEYLEVHQTELDKLTAQLKDMRRNSRL. The tract at residues 173–421 is necessary for interaction with NCAM and myoblast protrusion formation; that stretch reads RESLTEINRS…TTAATQHRAL (249 aa). Residues 384 to 474 are disordered; sequence GDLPYEDRVP…RSEVCQKPSN (91 aa). Residues 403–416 show a composition bias toward polar residues; it reads AHVSSSPDITTAAT. Over residues 423 to 437 the composition is skewed to low complexity; that stretch reads SSESSSPDCSSSDSC.

This sequence belongs to the RIPOR family. Homooligomer; homooligomerization is regulated by RHOC and leads to the formation of concatemers through the association of N- and C-termini. Interacts with NCAM.

It is found in the cytoplasm. Its subcellular location is the cytoskeleton. The protein resides in the cell projection. The protein localises to the filopodium. It localises to the apical cell membrane. It is found in the stereocilium. Its subcellular location is the stereocilium membrane. Acts as an inhibitor of the small GTPase RHOA and plays several roles in the regulation of myoblast and hair cell differentiation, lymphocyte T proliferation and neutrophil polarization. Plays a role in fetal mononuclear myoblast differentiation by promoting filopodia and myotube formation. Maintains naive T lymphocytes in a quiescent state and prevents chemokine-induced T lymphocyte responses, such as cell adhesion, polarization and migration. Involved also in the regulation of neutrophil polarization, chemotaxis and adhesion. Required for normal development of inner and outer hair cell stereocilia within the cochlea of the inner ear. Plays a role for maintaining the structural organization of the basal domain of stereocilia. Involved in mechanosensory hair cell function. Required for normal hearing. The sequence is that of Rho family-interacting cell polarization regulator 2 from Gallus gallus (Chicken).